We begin with the raw amino-acid sequence, 369 residues long: Phospho-N-acetylmuramoyl-pentapeptide-transferase (369 aa).

The next 10 helical transmembrane spans lie at 2-22 (IALLIGAGLALLCALVGTPLF), 55-75 (TVVVAAVLLSYGLTHLIMFLM), 86-106 (ALILLFLMVGMGLVGFLDDFI), 120-140 (AKLILQAAVGVIFAVLALNFP), 163-183 (LAFGGTVLGAILFVVWSNLIV), 196-216 (LDGLAAGASVMVFGAYTLMGI), 239-259 (PLDLALLAAIMSAALVGFLWW), 266-286 (IFMGDTGSLAIGGAIAGFAIL), 291-311 (LLLGIIGGLFVLITLSVIIQV), and 348-368 (ILGGLFVAVGLGIFYAEWVVL).

The protein belongs to the glycosyltransferase 4 family. MraY subfamily. Requires Mg(2+) as cofactor.

Its subcellular location is the cell membrane. It carries out the reaction UDP-N-acetyl-alpha-D-muramoyl-L-alanyl-gamma-D-glutamyl-meso-2,6-diaminopimeloyl-D-alanyl-D-alanine + di-trans,octa-cis-undecaprenyl phosphate = di-trans,octa-cis-undecaprenyl diphospho-N-acetyl-alpha-D-muramoyl-L-alanyl-D-glutamyl-meso-2,6-diaminopimeloyl-D-alanyl-D-alanine + UMP. It functions in the pathway cell wall biogenesis; peptidoglycan biosynthesis. Its function is as follows. Catalyzes the initial step of the lipid cycle reactions in the biosynthesis of the cell wall peptidoglycan: transfers peptidoglycan precursor phospho-MurNAc-pentapeptide from UDP-MurNAc-pentapeptide onto the lipid carrier undecaprenyl phosphate, yielding undecaprenyl-pyrophosphoryl-MurNAc-pentapeptide, known as lipid I. The sequence is that of Phospho-N-acetylmuramoyl-pentapeptide-transferase from Pseudarthrobacter chlorophenolicus (strain ATCC 700700 / DSM 12829 / CIP 107037 / JCM 12360 / KCTC 9906 / NCIMB 13794 / A6) (Arthrobacter chlorophenolicus).